The chain runs to 126 residues: Large ribosomal subunit protein bL17 (126 aa).

This sequence belongs to the bacterial ribosomal protein bL17 family. In terms of assembly, part of the 50S ribosomal subunit. Contacts protein L32.

This chain is Large ribosomal subunit protein bL17, found in Rickettsia felis (strain ATCC VR-1525 / URRWXCal2) (Rickettsia azadi).